A 535-amino-acid chain; its full sequence is Methylmalonate-semialdehyde/malonate-semialdehyde dehydrogenase [acylating], mitochondrial (535 aa).

Residues Met1–Phe33 constitute a mitochondrion transit peptide. Lys47, Lys52, Lys55, and Lys76 each carry N6-acetyllysine; alternate. Lys47, Lys52, Lys55, and Lys76 each carry N6-succinyllysine; alternate. An N6-acetyllysine modification is found at Lys87. Lys117 and Lys129 each carry N6-acetyllysine; alternate. An N6-succinyllysine; alternate mark is found at Lys117 and Lys129. Residues Ala183, Phe185, Lys209, Glu212, Arg213, and Ser262 each contribute to the NAD(+) site. Ser262 bears the Phosphoserine mark. Residue Lys298 is modified to N6-acetyllysine. Cys317 acts as the Nucleophile in catalysis. Residues Lys330 and Lys331 each carry the N6-acetyllysine modification. N6-acetyllysine; alternate occurs at positions 364 and 376. N6-succinyllysine; alternate occurs at positions 364 and 376. Ser380 bears the Phosphoserine mark. An N6-succinyllysine modification is found at Lys391. Residue Glu417 coordinates NAD(+). Lys500 bears the N6-acetyllysine mark. Residue Lys517 is modified to N6-succinyllysine.

The protein belongs to the aldehyde dehydrogenase family. In terms of assembly, homotetramer.

It localises to the mitochondrion. The catalysed reaction is 3-oxopropanoate + NAD(+) + CoA + H2O = hydrogencarbonate + acetyl-CoA + NADH + H(+). It carries out the reaction 2-methyl-3-oxopropanoate + NAD(+) + CoA + H2O = propanoyl-CoA + hydrogencarbonate + NADH + H(+). It catalyses the reaction (R)-2-methyl-3-oxopropanoate + NAD(+) + CoA + H2O = propanoyl-CoA + hydrogencarbonate + NADH + H(+). The enzyme catalyses (S)-2-methyl-3-oxopropanoate + NAD(+) + CoA + H2O = propanoyl-CoA + hydrogencarbonate + NADH + H(+). Malonate and methylmalonate semialdehyde dehydrogenase involved in the catabolism of valine, thymine, and compounds catabolized by way of beta-alanine, including uracil and cytidine. The polypeptide is Methylmalonate-semialdehyde/malonate-semialdehyde dehydrogenase [acylating], mitochondrial (Homo sapiens (Human)).